Consider the following 157-residue polypeptide: Ribosome maturation factor RimP (157 aa).

Belongs to the RimP family.

The protein resides in the cytoplasm. Required for maturation of 30S ribosomal subunits. This Thermobifida fusca (strain YX) protein is Ribosome maturation factor RimP.